We begin with the raw amino-acid sequence, 280 residues long: Antiactivator FleN (280 aa).

Residues 19-26 (KGGVGKTN), E153, N181, 215-217 (PYD), and R221 contribute to the ATP site.

This sequence belongs to the ParA family. As to quaternary structure, forms homodimers. Interacts with FleQ.

Its activity is regulated as follows. ATP-binding allows dimerization and subsequent antagonistic effect against FleQ. In terms of biological role, ATPase that plays an important role in maintaining flagellar number in Pseudomonas aeruginosa. Exhibits anti-activator activity against FleQ, the global transcriptional regulator of flagellar genes. This Pseudomonas aeruginosa (strain ATCC 15692 / DSM 22644 / CIP 104116 / JCM 14847 / LMG 12228 / 1C / PRS 101 / PAO1) protein is Antiactivator FleN.